A 129-amino-acid polypeptide reads, in one-letter code: Small ribosomal subunit protein uS11 (129 aa).

This sequence belongs to the universal ribosomal protein uS11 family. In terms of assembly, part of the 30S ribosomal subunit. Interacts with proteins S7 and S18. Binds to IF-3.

Located on the platform of the 30S subunit, it bridges several disparate RNA helices of the 16S rRNA. Forms part of the Shine-Dalgarno cleft in the 70S ribosome. The sequence is that of Small ribosomal subunit protein uS11 from Pseudomonas fluorescens (strain SBW25).